Here is a 182-residue protein sequence, read N- to C-terminus: Large ribosomal subunit protein uL15 (182 aa).

Residues 1-52 are disordered; it reads MDLSSLRPAKGAVKNKKRIGRGPGSGNGTTAGKGNKGQQSRSGYTRPVSEGG. The segment covering 21 to 35 has biased composition (gly residues); sequence RGPGSGNGTTAGKGN.

Belongs to the universal ribosomal protein uL15 family. Part of the 50S ribosomal subunit.

Binds to the 23S rRNA. This is Large ribosomal subunit protein uL15 from Chlorobium phaeobacteroides (strain BS1).